Here is a 165-residue protein sequence, read N- to C-terminus: Small ribosomal subunit protein uS5 (165 aa).

An S5 DRBM domain is found at 13-76; it reads LEENVVSINR…EDAKRHLIKV (64 aa).

This sequence belongs to the universal ribosomal protein uS5 family. Part of the 30S ribosomal subunit. Contacts proteins S4 and S8.

Its function is as follows. With S4 and S12 plays an important role in translational accuracy. In terms of biological role, located at the back of the 30S subunit body where it stabilizes the conformation of the head with respect to the body. The polypeptide is Small ribosomal subunit protein uS5 (Oenococcus oeni (strain ATCC BAA-331 / PSU-1)).